Reading from the N-terminus, the 281-residue chain is 4-deoxy-L-threo-5-hexosulose-uronate ketol-isomerase (281 aa).

Residues His-198, His-200, Glu-205, and His-248 each coordinate Zn(2+).

This sequence belongs to the KduI family. Zn(2+) is required as a cofactor.

The catalysed reaction is 5-dehydro-4-deoxy-D-glucuronate = 3-deoxy-D-glycero-2,5-hexodiulosonate. The protein operates within glycan metabolism; pectin degradation; 2-dehydro-3-deoxy-D-gluconate from pectin: step 4/5. Functionally, catalyzes the isomerization of 5-dehydro-4-deoxy-D-glucuronate to 3-deoxy-D-glycero-2,5-hexodiulosonate. The chain is 4-deoxy-L-threo-5-hexosulose-uronate ketol-isomerase from Lacticaseibacillus casei (strain BL23) (Lactobacillus casei).